The following is a 158-amino-acid chain: Protein Smg homolog (158 aa).

This sequence belongs to the Smg family.

The sequence is that of Protein Smg homolog from Pseudoalteromonas atlantica (strain T6c / ATCC BAA-1087).